Reading from the N-terminus, the 156-residue chain is uncharacterized protein (156 aa).

3 consecutive transmembrane segments (helical) span residues 42-59 (LLMM…MTTV), 79-98 (ASFL…LLLY), and 105-127 (SLGR…VLGI).

The protein localises to the cell membrane. This is an uncharacterized protein from Archaeoglobus fulgidus (strain ATCC 49558 / DSM 4304 / JCM 9628 / NBRC 100126 / VC-16).